A 390-amino-acid polypeptide reads, in one-letter code: 8-amino-7-oxononanoate synthase (390 aa).

Position 19 (Arg-19) interacts with substrate. Pyridoxal 5'-phosphate is bound at residue Gly-106 to Tyr-107. A substrate-binding site is contributed by His-131. Residues Ser-176, His-204, and Thr-233 each coordinate pyridoxal 5'-phosphate. Lys-236 carries the post-translational modification N6-(pyridoxal phosphate)lysine. Residue Thr-350 coordinates substrate.

Belongs to the class-II pyridoxal-phosphate-dependent aminotransferase family. BioF subfamily. In terms of assembly, homodimer. Requires pyridoxal 5'-phosphate as cofactor.

It catalyses the reaction 6-carboxyhexanoyl-[ACP] + L-alanine + H(+) = (8S)-8-amino-7-oxononanoate + holo-[ACP] + CO2. The protein operates within cofactor biosynthesis; biotin biosynthesis. Functionally, catalyzes the decarboxylative condensation of pimeloyl-[acyl-carrier protein] and L-alanine to produce 8-amino-7-oxononanoate (AON), [acyl-carrier protein], and carbon dioxide. The polypeptide is 8-amino-7-oxononanoate synthase (Pseudomonas putida (strain ATCC 700007 / DSM 6899 / JCM 31910 / BCRC 17059 / LMG 24140 / F1)).